The sequence spans 203 residues: Molybdenum cofactor guanylyltransferase (203 aa).

GTP contacts are provided by residues 20 to 22 (LAG), lysine 33, asparagine 61, aspartate 78, and aspartate 108. Aspartate 108 serves as a coordination point for Mg(2+).

It belongs to the MobA family. Monomer. It depends on Mg(2+) as a cofactor.

The protein localises to the cytoplasm. It catalyses the reaction Mo-molybdopterin + GTP + H(+) = Mo-molybdopterin guanine dinucleotide + diphosphate. In terms of biological role, transfers a GMP moiety from GTP to Mo-molybdopterin (Mo-MPT) cofactor (Moco or molybdenum cofactor) to form Mo-molybdopterin guanine dinucleotide (Mo-MGD) cofactor. The protein is Molybdenum cofactor guanylyltransferase of Vibrio cholerae serotype O1 (strain ATCC 39315 / El Tor Inaba N16961).